A 605-amino-acid polypeptide reads, in one-letter code: Elongation factor 4 (605 aa).

The tr-type G domain occupies 9 to 192; that stretch reads NRIRNFCIIA…AIVQRIPAPA (184 aa). GTP-binding positions include 21–26 and 139–142; these read DHGKST and NKID.

It belongs to the TRAFAC class translation factor GTPase superfamily. Classic translation factor GTPase family. LepA subfamily.

It localises to the cell inner membrane. The catalysed reaction is GTP + H2O = GDP + phosphate + H(+). Required for accurate and efficient protein synthesis under certain stress conditions. May act as a fidelity factor of the translation reaction, by catalyzing a one-codon backward translocation of tRNAs on improperly translocated ribosomes. Back-translocation proceeds from a post-translocation (POST) complex to a pre-translocation (PRE) complex, thus giving elongation factor G a second chance to translocate the tRNAs correctly. Binds to ribosomes in a GTP-dependent manner. The sequence is that of Elongation factor 4 from Pelodictyon phaeoclathratiforme (strain DSM 5477 / BU-1).